The sequence spans 1115 residues: MDTFRKWLNKPKADDKSLLARFYHADRSLTAVASELDSFDGRAEPDRCTRLVSRLRQNQDKVLAITNMIMEELLGEDRDPRAFRAKFPEEVLQENLAGQLWFGAECLAAGSSILNRESESKEMRPLAQAVTKSLGHVRVLLRDQCLRNNVPNSKTLHLDFNDSNTEQLYESLKIFDHLFAEFELSYVSAMVQVKSRHEYEMQQWIGVLFSETLQRSLKVGLLDQDMVDAFDPGLMFSIPRLAIVAGLVVYAKGPLNMDMPGDQLSEMFRPFRTILIKIRDLLRNLSKQELYQLEKLLCTNEDINTKVPLGSSSIEAPSPEHNNSSSTTNTSNNNNNNTNNNNSSSGSDCTNNDKTGTTTNTHKPVERLVDHRNNNTTNSQQTSSCSVNAAATTPATSSRTRTPPSILSPSAGSTPTASPAPSPTPSHSIASTSSAATTSTNSPAHWSDYDDDDEDDDDDDVHADVEEDEDESGILDSDEHDLNDDSDSEVDEFFEAQLKAIVAAVDCAPGYLIPDCASGYLISNTNLGNLLQPQQVPLTDNFVASEDDELGNPTAVDQQQQPQQQLEHHQQQLQQQQHTEDEPSTSAAMLAARRTLQRLRLPSSSSDNEPSSNNQQMTIKSPSEQTTTRSSSNRHRHHSHHHHHHHHSHHHHHHQPTAAVAVAAAQDEQHNNNQPHSHSHSSSHHHHHNHQSHSHPHRANRSTRKRCSQEHCETITTTKTTSGGEQQTEDSLDSSTASSLSDDVSLAMRNTTARLKFKSTENLLHRLFVCIAGVADQLQTNFASDLRQILRSVFLMNMSSAQEDIDIPEKTKESELFEFRASENDVIQESAGSNQSIYSAEEVNPELDNVFNTNTGTNGARHSAGATMQRNNTIDLATVQSSNSGNSSSSNSSSSSSAARSHVARSRSLGDHDQASTSSSQQQQRELQLQLQQQQQQQAQMQQQLQRHRNNSVGSNSPSSASSTSSNSEHNSPVSTRSGSRRRLPSNTTTTLSTSIGTAATTPTGATTTGVTTTTTMSPPAWIPDGKAPRCMSCQTPFTVVRRRHHCRNCGGVFCGVCSNASAPLPKYGLTKAVRVCRECFMREVRQSHSHGQSQSQIHSPTQQAGGRPQAASAS.

4 disordered regions span residues 308 to 488 (PLGS…DSDS), 545 to 586 (SEDD…PSTS), 600 to 742 (RLPS…SLSD), and 879 to 1027 (VQSS…PDGK). The segment covering 322–361 (NNSSSTTNTSNNNNNNTNNNNSSSGSDCTNNDKTGTTTNT) has biased composition (low complexity). Residues 363-373 (KPVERLVDHRN) show a composition bias toward basic and acidic residues. 2 stretches are compositionally biased toward low complexity: residues 374 to 417 (NNTT…TPTA) and 425 to 444 (PSHS…NSPA). A compositionally biased stretch (acidic residues) spans 449–488 (YDDDDEDDDDDDVHADVEEDEDESGILDSDEHDLNDDSDS). 2 stretches are compositionally biased toward low complexity: residues 558 to 577 (QQQQ…QQQQ) and 600 to 614 (RLPS…SSNN). A phosphoserine mark is found at Ser-603 and Ser-604. A compositionally biased stretch (polar residues) spans 615-628 (QQMTIKSPSEQTTT). Residues 632-655 (SNRHRHHSHHHHHHHHSHHHHHHQ) show a composition bias toward basic residues. A compositionally biased stretch (low complexity) spans 658–676 (AAVAVAAAQDEQHNNNQPH). Basic residues predominate over residues 677-706 (SHSHSSSHHHHHNHQSHSHPHRANRSTRKR). Composition is skewed to low complexity over residues 714-726 (TITT…GGEQ), 733-742 (DSSTASSLSD), and 881-901 (SSNS…AARS). The residue at position 908 (Ser-908) is a Phosphoserine. Low complexity-rich tracts occupy residues 921 to 975 (QQQQ…SPVS) and 988 to 1020 (TTTT…MSPP). Residues 1025–1085 (DGKAPRCMSC…VCRECFMREV (61 aa)) form an FYVE-type zinc finger. Residues Cys-1031, Cys-1034, Cys-1047, Cys-1050, Cys-1055, Cys-1058, Cys-1077, and Cys-1080 each coordinate Zn(2+). The segment at 1088–1115 (SHSHGQSQSQIHSPTQQAGGRPQAASAS) is disordered. Low complexity predominate over residues 1090 to 1100 (SHGQSQSQIHS).

This sequence belongs to the lst-2 family.

In terms of biological role, negative regulator of epidermal growth factor receptor (EGFR) signaling. In Drosophila grimshawi (Hawaiian fruit fly), this protein is Lateral signaling target protein 2 homolog.